Reading from the N-terminus, the 395-residue chain is Tryptophan synthase beta chain (395 aa).

Lysine 86 carries the post-translational modification N6-(pyridoxal phosphate)lysine.

Belongs to the TrpB family. As to quaternary structure, tetramer of two alpha and two beta chains. Pyridoxal 5'-phosphate is required as a cofactor.

The catalysed reaction is (1S,2R)-1-C-(indol-3-yl)glycerol 3-phosphate + L-serine = D-glyceraldehyde 3-phosphate + L-tryptophan + H2O. It participates in amino-acid biosynthesis; L-tryptophan biosynthesis; L-tryptophan from chorismate: step 5/5. Its function is as follows. The beta subunit is responsible for the synthesis of L-tryptophan from indole and L-serine. This chain is Tryptophan synthase beta chain, found in Psychromonas ingrahamii (strain DSM 17664 / CCUG 51855 / 37).